The sequence spans 323 residues: 1D-myo-inositol 2-acetamido-2-deoxy-alpha-D-glucopyranoside deacetylase (323 aa).

3 residues coordinate Zn(2+): His28, Asp31, and His163.

This sequence belongs to the MshB deacetylase family. Zn(2+) serves as cofactor.

The enzyme catalyses 1D-myo-inositol 2-acetamido-2-deoxy-alpha-D-glucopyranoside + H2O = 1D-myo-inositol 2-amino-2-deoxy-alpha-D-glucopyranoside + acetate. Functionally, catalyzes the deacetylation of 1D-myo-inositol 2-acetamido-2-deoxy-alpha-D-glucopyranoside (GlcNAc-Ins) in the mycothiol biosynthesis pathway. In Streptomyces scabiei (strain 87.22), this protein is 1D-myo-inositol 2-acetamido-2-deoxy-alpha-D-glucopyranoside deacetylase.